Here is a 47-residue protein sequence, read N- to C-terminus: Protein RL9A (47 aa).

Residues C27–L47 traverse the membrane as a helical segment.

Its subcellular location is the host membrane. This chain is Protein RL9A (RL9A), found in Human cytomegalovirus (strain Merlin) (HHV-5).